A 105-amino-acid polypeptide reads, in one-letter code: Small ribosomal subunit protein bS6 (105 aa).

The protein belongs to the bacterial ribosomal protein bS6 family.

In terms of biological role, binds together with bS18 to 16S ribosomal RNA. The sequence is that of Small ribosomal subunit protein bS6 from Lawsonia intracellularis (strain PHE/MN1-00).